Here is a 191-residue protein sequence, read N- to C-terminus: HTH-type transcriptional regulator YjdC (191 aa).

One can recognise an HTH tetR-type domain in the interval methionine 1–isoleucine 60.

The chain is HTH-type transcriptional regulator YjdC (yjdC) from Escherichia coli (strain K12).